An 874-amino-acid chain; its full sequence is MTSERYNAREAEPRWQRQWDEKAIFATKNDDPRPKYYVLEMFPYPSGRIHIGHVRNYTLGDVLARFMRAKGFNVLHPMGWDAFGLPAENAAIERKVAPKAWTYDNIAAMKKQLRSIGLSLDWAREFATCDPSYYKHQQKMFLDFMQAGLVEREQRKVNWDPVDMTVLANEQVIDGRGWRSGAVVEQREMNQWVFKITKYSQELLDALDGLDRWPDKVRLMQRNWIGRSEGLLIRFALDPKTVPAGESELKIFTTRPDTLFGAKFMAISADHPLAQAAAAKNPELAAFIAEIKRIGTAQEAIDTAEKQGFDTGIRAVHPFDPSWTLPVYVANFVLMEYGTGAIFGCPAHDQRDLDFVNKYGLGNTPVVCPEGQDPASFVITDTAYDGDGRMINSRFLDGMTIAQAKDEVAKRLESEQRGGSPIGERQVNFRLRDWGISRQRYWGCPIPVIHCATCDVVPVPAGDLPVVLPDDVTFDKPGNALDHHPTWKHVTCPKCGGKATRETDTMDTFVDSSWYFARFTDPWNETAPTTPAVANRMMPVDQYIGGVEHAILHLLYSRFFTRAMKATGHVAMDEPFAGMFTQGMVVHETYQKADGTYVNPADVKIEVGGNGRRAVLTATGEDITIGPIEKMSKSKKNTVDPDDIIESYGADVARWFMLSDSPPDRDVIWSDERVQGAARFVQRLWRLVNESVAASAEAPSSRPANFSADALALRKAAHGALDKVTGGIERLHFNVCLAHIREFANALADVLAKPAKPAPDLAWATREAAGILVQLFSPMMPHLAEECWQVLGHSGLISEASWPQIERDLLVEDSMTLVVQVNGKKRGEVTVASNAQNPEIESAVLALDAVKVALDGKPVRKVIIVPKRIVNVVG.

Positions Pro-43 to His-53 match the 'HIGH' region motif. The 'KMSKS' region motif lies at Lys-630–Ser-634. Lys-633 contributes to the ATP binding site.

Belongs to the class-I aminoacyl-tRNA synthetase family.

The protein localises to the cytoplasm. The catalysed reaction is tRNA(Leu) + L-leucine + ATP = L-leucyl-tRNA(Leu) + AMP + diphosphate. In Bradyrhizobium sp. (strain ORS 278), this protein is Leucine--tRNA ligase.